Reading from the N-terminus, the 382-residue chain is Mannitol-1-phosphate 5-dehydrogenase (382 aa).

3–14 (ALHFGAGNIGRG) provides a ligand contact to NAD(+). Lysine 269 is modified (N6-acetyllysine).

The protein belongs to the mannitol dehydrogenase family.

It carries out the reaction D-mannitol 1-phosphate + NAD(+) = beta-D-fructose 6-phosphate + NADH + H(+). This Escherichia coli (strain ATCC 8739 / DSM 1576 / NBRC 3972 / NCIMB 8545 / WDCM 00012 / Crooks) protein is Mannitol-1-phosphate 5-dehydrogenase.